The following is a 132-amino-acid chain: L-ectoine synthase (132 aa).

Belongs to the ectoine synthase family.

It carries out the reaction (2S)-4-acetamido-2-aminobutanoate = L-ectoine + H2O. The protein operates within amine and polyamine biosynthesis; ectoine biosynthesis; L-ectoine from L-aspartate 4-semialdehyde: step 3/3. In terms of biological role, catalyzes the circularization of gamma-N-acetyl-alpha,gamma-diaminobutyric acid (ADABA) to ectoine (1,4,5,6-tetrahydro-2-methyl-4-pyrimidine carboxylic acid), which is an excellent osmoprotectant. This Rhodococcus erythropolis (strain PR4 / NBRC 100887) protein is L-ectoine synthase.